The following is a 319-amino-acid chain: Putative G-protein coupled receptor B0244.7 (319 aa).

Asparagine 28 carries N-linked (GlcNAc...) asparagine glycosylation. The next 6 membrane-spanning stretches (helical) occupy residues 49–69 (AIFI…IYIF), 107–127 (LPVI…FIIF), 131–151 (SFLS…IAVV), 166–186 (VLLI…CGIV), 206–226 (GPVL…CLVI), and 261–281 (LFAG…SAII).

Belongs to the G-protein coupled receptor 1 family. B0244 subfamily.

It is found in the cell membrane. This chain is Putative G-protein coupled receptor B0244.7, found in Caenorhabditis elegans.